The chain runs to 832 residues: Armadillo segment polarity protein (832 aa).

The span at Met1–Asp20 shows a compositional bias: polar residues. The tract at residues Met1–Pro24 is disordered. ARM repeat units follow at residues Asn146–Lys185, Ala188–His228, Arg230–Leu269, Asp272–Tyr311, Ser356–Asp395, Ala397–Cys434, Ser483–Leu524, Glu594–Val634, and Lys636–Glu675. Residues Ala721–Leu832 are disordered. A compositionally biased stretch (low complexity) spans Pro767–Asn777.

This sequence belongs to the beta-catenin family.

It localises to the cytoplasm. It is found in the cell membrane. The protein localises to the cell junction. Its subcellular location is the adherens junction. Functionally, may associate with CadN and participate in the transmission of developmental information. Can associate with alpha-catenin. Accumulates through wg signaling; arm function in wg signal transduction is required early in development for determination of neuroblast fate. Arm and Abl proteins function cooperatively at adherens junctions in both the CNS and epidermis. In Aedes aegypti (Yellowfever mosquito), this protein is Armadillo segment polarity protein.